The chain runs to 218 residues: DNA-directed RNA polymerase III subunit RPC7-like (218 aa).

The interval 130–218 (TIILPKRPPK…SDDNMDEAIY (89 aa)) is disordered. Residues 139–160 (KSTDDKEETIQKLETLEKKEEE) are compositionally biased toward basic and acidic residues. Acidic residues-rich tracts occupy residues 161 to 193 (VTSEEDEEKEEEEEKEEGEEEEYDEEEHEEETD) and 201 to 218 (NGEDFGGDSDDNMDEAIY).

It belongs to the eukaryotic RPC7 RNA polymerase subunit family. Component of the RNA polymerase III (Pol III) complex consisting of 17 subunits. Pol III exists as two alternative complexes defined by the mutually exclusive incorporation of subunit POLR3G/RPC7alpha or POLR3GL/RPC7beta. Found in a trimeric complex with POLR3C/RPC3 and POLR3F/RPC6. Directly interacts with POLR3C. As to expression, expressed in the liver.

The protein localises to the nucleus. Its function is as follows. DNA-dependent RNA polymerase catalyzes the transcription of DNA into RNA using the four ribonucleoside triphosphates as substrates. Specific peripheric component of RNA polymerase III which synthesizes small RNAs, such as 5S rRNA and tRNAs. The polypeptide is DNA-directed RNA polymerase III subunit RPC7-like (Mus musculus (Mouse)).